Consider the following 379-residue polypeptide: GDP-mannose transporter 1 (379 aa).

At 1–39 (MTDNRKPEDYTIEMDKLGQNKNYQAPPPPPQPRSSTASS) the chain is on the cytoplasmic side. The disordered stretch occupies residues 17–38 (LGQNKNYQAPPPPPQPRSSTAS). Residues 40-60 (ISNNAALSVLAYCGSSILMTV) traverse the membrane as a helical segment. At 61–69 (MNKYVLSSD) the chain is on the lumenal side. The chain crosses the membrane as a helical span at residues 70 to 90 (FNLNFFLLCVQSLVCIIAIQL). At 91 to 110 (CKACGLITYRDFNLDEARKW) the chain is on the cytoplasmic side. The helical transmembrane segment at 111–133 (FPITLLLIGMIYTGSKALQFLSI) threads the bilayer. Residues 134-136 (PVY) are Lumenal-facing. Residues 137–156 (TIFKNLTIILIAYGEVLWFG) form a helical membrane-spanning segment. Residues 157-162 (GSVTNL) lie on the Cytoplasmic side of the membrane. Residues 163–182 (TLFSFGLMVFSSIIAAWADI) traverse the membrane as a helical segment. Residues 183-198 (KHAIESSGDATSKVST) lie on the Lumenal side of the membrane. A helical transmembrane segment spans residues 199-219 (LNAGYIWMLINCLCTSSYVLG). The Cytoplasmic portion of the chain corresponds to 220–233 (MRKRIKLTNFKDFD). The chain crosses the membrane as a helical span at residues 234-254 (TMFYNNLLSIPVLIVCSGILE). Topologically, residues 255–272 (DWSPANVARNFPSADRNG) are lumenal. The chain crosses the membrane as a helical span at residues 273-293 (IMFAMILSGLSTVFISYTSAW). Residues 294 to 301 (CVRVTSST) are Cytoplasmic-facing. The helical transmembrane segment at 302 to 322 (TYSMVGALNKLPIALSGLIFF) threads the bilayer. At 323 to 325 (DAP) the chain is on the lumenal side. A helical transmembrane segment spans residues 326-346 (VTFPSVSAIMVGFVSGIVYAV). Over 347 to 379 (AKIKQNAKPKVGILPTTNPVSASSQSMRDSLRS) the chain is Cytoplasmic.

It belongs to the TPT transporter family. SLC35D subfamily. Homooligomer.

It localises to the golgi apparatus membrane. Its subcellular location is the cytoplasmic vesicle membrane. It is found in the endoplasmic reticulum membrane. Functionally, involved in the import of GDP-mannose from the cytoplasm into the Golgi lumen. The protein is GDP-mannose transporter 1 (gmt1) of Emericella nidulans (strain FGSC A4 / ATCC 38163 / CBS 112.46 / NRRL 194 / M139) (Aspergillus nidulans).